We begin with the raw amino-acid sequence, 358 residues long: Molybdenum import ATP-binding protein ModC (358 aa).

The ABC transporter domain maps to 3–228 (INVKQKLGDL…LEMRPWLPAK (226 aa)). 30–37 (GRSGAGKT) is an ATP binding site. Residues 289-356 (QTSIRNVLLA…IKGVSVTKDD (68 aa)) enclose the Mop domain.

This sequence belongs to the ABC transporter superfamily. Molybdate importer (TC 3.A.1.8) family. The complex is composed of two ATP-binding proteins (ModC), two transmembrane proteins (ModB) and a solute-binding protein (ModA).

The protein resides in the cell inner membrane. It carries out the reaction molybdate(out) + ATP + H2O = molybdate(in) + ADP + phosphate + H(+). Part of the ABC transporter complex ModABC involved in molybdenum import. Responsible for energy coupling to the transport system. The polypeptide is Molybdenum import ATP-binding protein ModC (Photobacterium profundum (strain SS9)).